The chain runs to 170 residues: UPF0260 protein RPE_1881 (170 aa).

The protein belongs to the UPF0260 family.

This Rhodopseudomonas palustris (strain BisA53) protein is UPF0260 protein RPE_1881.